A 351-amino-acid chain; its full sequence is Glycerol-1-phosphate dehydrogenase [NAD(P)+] (351 aa).

Residues 97-101 (GTVID) and 119-122 (TSPS) contribute to the NAD(+) site. Position 124 (D124) interacts with substrate. S128 is an NAD(+) binding site. Substrate is bound at residue D171. 2 residues coordinate Zn(2+): D171 and H251. Position 255 (H255) interacts with substrate. A Zn(2+)-binding site is contributed by H267.

Belongs to the glycerol-1-phosphate dehydrogenase family. Homodimer. The cofactor is Zn(2+).

It localises to the cytoplasm. It carries out the reaction sn-glycerol 1-phosphate + NAD(+) = dihydroxyacetone phosphate + NADH + H(+). It catalyses the reaction sn-glycerol 1-phosphate + NADP(+) = dihydroxyacetone phosphate + NADPH + H(+). It participates in membrane lipid metabolism; glycerophospholipid metabolism. Its function is as follows. Catalyzes the NAD(P)H-dependent reduction of dihydroxyacetonephosphate (DHAP or glycerone phosphate) to glycerol 1-phosphate (G1P). The G1P thus generated is used as the glycerophosphate backbone of phospholipids in the cellular membranes of Archaea. This Sulfolobus acidocaldarius (strain ATCC 33909 / DSM 639 / JCM 8929 / NBRC 15157 / NCIMB 11770) protein is Glycerol-1-phosphate dehydrogenase [NAD(P)+].